The following is a 715-amino-acid chain: Polyribonucleotide nucleotidyltransferase (715 aa).

2 residues coordinate Mg(2+): Asp485 and Asp491. Residues 552–611 enclose the KH domain; the sequence is PRIHTMKIDPKKIKDVIGKGGAVIRALTEETGTSIDIDDDGTVKIAATDNNAAKAVMARI. The S1 motif domain maps to 621-689; that stretch reads NAIYKGKVTR…RQNRIRLTMK (69 aa). The interval 695–715 is disordered; the sequence is TPVAENVTEEAEVSSEQQAEI.

This sequence belongs to the polyribonucleotide nucleotidyltransferase family. Component of the RNA degradosome, which is a multiprotein complex involved in RNA processing and mRNA degradation. It depends on Mg(2+) as a cofactor.

It localises to the cytoplasm. The enzyme catalyses RNA(n+1) + phosphate = RNA(n) + a ribonucleoside 5'-diphosphate. Involved in mRNA degradation. Catalyzes the phosphorolysis of single-stranded polyribonucleotides processively in the 3'- to 5'-direction. This chain is Polyribonucleotide nucleotidyltransferase, found in Actinobacillus pleuropneumoniae serotype 3 (strain JL03).